A 331-amino-acid polypeptide reads, in one-letter code: Ornithine carbamoyltransferase (331 aa).

Carbamoyl phosphate-binding positions include 55–58 (STRT), Q82, R106, and 133–136 (HPTQ). L-ornithine is bound by residues N166, D230, and 234-235 (SM). Carbamoyl phosphate-binding positions include 272 to 273 (CL) and R317.

This sequence belongs to the aspartate/ornithine carbamoyltransferase superfamily. OTCase family.

The protein resides in the cytoplasm. It carries out the reaction carbamoyl phosphate + L-ornithine = L-citrulline + phosphate + H(+). It participates in amino-acid biosynthesis; L-arginine biosynthesis; L-arginine from L-ornithine and carbamoyl phosphate: step 1/3. Functionally, reversibly catalyzes the transfer of the carbamoyl group from carbamoyl phosphate (CP) to the N(epsilon) atom of ornithine (ORN) to produce L-citrulline. This is Ornithine carbamoyltransferase from Neisseria gonorrhoeae (strain ATCC 700825 / FA 1090).